We begin with the raw amino-acid sequence, 604 residues long: Aspartate--tRNA(Asp/Asn) ligase (604 aa).

Glu175 contacts L-aspartate. Residues Gln199–Lys202 form an aspartate region. Residues Arg221 and His456 each coordinate L-aspartate. Arg221 to Glu223 is a binding site for ATP. Residue Glu496 participates in ATP binding. Residue Arg503 coordinates L-aspartate. Position 548–551 (Gly548–Arg551) interacts with ATP.

It belongs to the class-II aminoacyl-tRNA synthetase family. Type 1 subfamily. As to quaternary structure, homodimer.

It is found in the cytoplasm. The enzyme catalyses tRNA(Asx) + L-aspartate + ATP = L-aspartyl-tRNA(Asx) + AMP + diphosphate. Its function is as follows. Aspartyl-tRNA synthetase with relaxed tRNA specificity since it is able to aspartylate not only its cognate tRNA(Asp) but also tRNA(Asn). Reaction proceeds in two steps: L-aspartate is first activated by ATP to form Asp-AMP and then transferred to the acceptor end of tRNA(Asp/Asn). The chain is Aspartate--tRNA(Asp/Asn) ligase from Methylorubrum populi (strain ATCC BAA-705 / NCIMB 13946 / BJ001) (Methylobacterium populi).